We begin with the raw amino-acid sequence, 258 residues long: DNA repair protein RecO (258 aa).

Belongs to the RecO family.

Functionally, involved in DNA repair and RecF pathway recombination. The sequence is that of DNA repair protein RecO from Desulfatibacillum aliphaticivorans.